Here is a 463-residue protein sequence, read N- to C-terminus: MVASKIAWKFILPNCFKAKNDRNILPSETKIIQICKQINSDHHHSRLAISDISTDSRSVFISLDDLSSNAIIGSNLHIFTYAELKIITSKFSSANFLGKGGFGPVHKGFIDDKIKPGLKAQPVAVKLLDLDGNQGHQEWLTEVVFLGQLRHPHLVKLIGYCWEEEQRLLVYEYMARGNLENHLFSRYSSCLPWSTRIKIAVGAAKGLAFLHGEEKPVIYRDFKASNILLDSDYKAKLSDFGLAKDGPEGDDTHVSTRVMGTHGYAAPEYIMTGHLTSKSDVYSFGVVLLELITGRPAMDKNRPIRERNLVDWARPMLRDFHKLDRIMDPRLEGQYSTEGAKKVAALAYQCLSHQPRSRPTMSNVVKSLEPISELTDIPIGPFVYVVPSSECDKELEIGALKSKLDEEKKMNVNEDEQKGARRHGHRHKHRPKSSAAAAAVYSDTHMQNFALSHERTNKKHILK.

One can recognise a Protein kinase domain in the interval 91–383; it reads FSSANFLGKG…LTDIPIGPFV (293 aa). Residues 97 to 105 and lysine 126 each bind ATP; that span reads LGKGGFGPV. 2 positions are modified to phosphotyrosine: tyrosine 171 and tyrosine 173. The active-site Proton acceptor is the aspartate 221.

This sequence belongs to the protein kinase superfamily. Ser/Thr protein kinase family. As to quaternary structure, interacts with the V.dahliae elicitor EPD1 (AC G2WWH6). In terms of processing, phosphorylated at Tyr-171 and Tyr-173 in the presence of pathogen-associated molecular patterns (PAMPs); this triggers the expression of pathogenesis-related genes.

It localises to the cell membrane. The catalysed reaction is L-seryl-[protein] + ATP = O-phospho-L-seryl-[protein] + ADP + H(+). The enzyme catalyses L-threonyl-[protein] + ATP = O-phospho-L-threonyl-[protein] + ADP + H(+). Its function is as follows. Required for pathogen-associated molecular pattern (PAMP, e.g. chitin and flg22)-triggered immunity (PTI) involving reactive oxygen species (ROS) accumulation and triggering plant defense, including defense-related gene expression (e.g. PR1 and LOX). Ensures specific recognition of the EPD1 effector of Verticillium dahliae, resulting in a hypersensitive response known as effector-triggered immunity (ETI), characterized by the activation of programmed cell death to limit infection by the pathogen. Priming plants with the incompatible pathogen V.dahliae leads to an increased resistance to both the broad-host-range filamentous pathogen Botrytis cinerea and the semibiotrophic pathogen Phytophthora capsici, as a result of systemic acquired resistance (SAR). This is EPD1-interacting receptor-like cytoplasmic serine/threonine-protein kinase from Nicotiana benthamiana.